The following is a 225-amino-acid chain: Uracil-DNA glycosylase (225 aa).

Asp65 serves as the catalytic Proton acceptor.

It belongs to the uracil-DNA glycosylase (UDG) superfamily. UNG family.

It is found in the cytoplasm. The catalysed reaction is Hydrolyzes single-stranded DNA or mismatched double-stranded DNA and polynucleotides, releasing free uracil.. Functionally, excises uracil residues from the DNA which can arise as a result of misincorporation of dUMP residues by DNA polymerase or due to deamination of cytosine. The sequence is that of Uracil-DNA glycosylase from Lysinibacillus sphaericus (strain C3-41).